Here is a 743-residue protein sequence, read N- to C-terminus: Glycerol-3-phosphate O-acyltransferase 2 (743 aa).

Topologically, residues 1 to 34 (MSAPAADHNAAKPIPHVPQASRRYKNSYNGFVYN) are lumenal. A helical transmembrane segment spans residues 35–55 (IHTWLYDVSVFLFNILFTIFF). Residues 56–442 (REIKVRGAYN…TKLEALRCFV (387 aa)) are Cytoplasmic-facing. Residues 443–457 (TLIVRLIKFSVFAIL) traverse the membrane as a helical segment. A topological domain (lumenal) is located at residue Ser458. The helical transmembrane segment at 459-473 (LPGSILFTPIFIICR) threads the bilayer. At 474–501 (VYSEKKAKEGLKKSLVKIKGTDLLATWK) the chain is on the cytoplasmic side. The helical transmembrane segment at 502–522 (LIVALILAPILYVTYSILLII) threads the bilayer. Residues 523 to 531 (LARKQHYCR) are Lumenal-facing. The helical transmembrane segment at 532–552 (IWVPSNNAFIQFVYFYALLVF) threads the bilayer. The Cytoplasmic portion of the chain corresponds to 553 to 743 (TTYSSLKTGE…RQKREHEKKE (191 aa)). 9 positions are modified to phosphoserine: Ser632, Ser637, Ser647, Ser651, Ser654, Ser657, Ser664, Ser668, and Ser671. The residue at position 673 (Thr673) is a Phosphothreonine. The disordered stretch occupies residues 682–743 (KQGQWKSEGE…RQKREHEKKE (62 aa)). A Phosphoserine modification is found at Ser688. Positions 691–700 (ETSEDEDEFD) are enriched in acidic residues. Thr692 carries the post-translational modification Phosphothreonine. The residue at position 693 (Ser693) is a Phosphoserine.

Belongs to the GPAT/DAPAT family. Phosphorylated at a conserved motif involving Ser-664, Ser-668 and Ser-671. This phosphorylation plays a critical role for efficient TAG mobilization. Phosphorylation deficiency at this motif increases the enzyme activity and consequently induces de novo formation of phosphatidic acid.

The protein resides in the lipid droplet. It localises to the endoplasmic reticulum membrane. It catalyses the reaction sn-glycerol 3-phosphate + an acyl-CoA = a 1-acyl-sn-glycero-3-phosphate + CoA. The catalysed reaction is dihydroxyacetone phosphate + an acyl-CoA = a 1-acylglycerone 3-phosphate + CoA. It carries out the reaction sn-glycerol 3-phosphate + hexadecanoyl-CoA = 1-hexadecanoyl-sn-glycero-3-phosphate + CoA. The enzyme catalyses (9Z)-hexadecenoyl-CoA + sn-glycerol 3-phosphate = 1-(9Z-hexadecenoyl)-sn-glycero-3-phosphate + CoA. It catalyses the reaction sn-glycerol 3-phosphate + octadecanoyl-CoA = 1-octadecanoyl-sn-glycero-3-phosphate + CoA. The catalysed reaction is sn-glycerol 3-phosphate + (9Z)-octadecenoyl-CoA = 1-(9Z-octadecenoyl)-sn-glycero-3-phosphate + CoA. It functions in the pathway phospholipid metabolism; CDP-diacylglycerol biosynthesis; CDP-diacylglycerol from sn-glycerol 3-phosphate: step 1/3. In terms of biological role, dual substrate-specific glycerol-3-phosphate/dihydroxyacetone phosphate sn-1 acyltransferase, catalyzing the first and committed reaction in the de novo synthesis of glycerophospholipids and triacylglycerols (TAGs). Can use both Gly-3-P and dihydroxyacetone phosphate with similar efficiencies and has a broad fatty acyl-CoA specificity profile. Transfers a fatty acid from fatty acyl-CoA to the sn-1 position of glycerol-3-phosphate to produce lysophosphatidic acid (LysoPA). These lipids not only are precursors of glycerolipids, but also are dynamic components of signal transduction systems that control cell physiology. This chain is Glycerol-3-phosphate O-acyltransferase 2 (GPT2), found in Saccharomyces cerevisiae (strain ATCC 204508 / S288c) (Baker's yeast).